We begin with the raw amino-acid sequence, 620 residues long: Arginine--tRNA ligase (620 aa).

Residues 147–157 (ANPTGPIHIGG) carry the 'HIGH' region motif.

This sequence belongs to the class-I aminoacyl-tRNA synthetase family. Monomer.

It is found in the cytoplasm. It carries out the reaction tRNA(Arg) + L-arginine + ATP = L-arginyl-tRNA(Arg) + AMP + diphosphate. The chain is Arginine--tRNA ligase from Bifidobacterium longum subsp. infantis (strain ATCC 15697 / DSM 20088 / JCM 1222 / NCTC 11817 / S12).